The sequence spans 534 residues: Membrane-bound lytic murein transglycosylase F (534 aa).

Positions 1–24 (MQISQFNRLKRSALLFASVLLLSA) are cleaved as a signal peptide. Residues 25–285 (CQIESEPKSE…TLEEKYIGHI (261 aa)) form a non-LT domain region. Residues 287-534 (AFDYVDTRAF…AEQTPVPKAE (248 aa)) form an LT domain region. Residue Glu330 is part of the active site. Positions 507–534 (VSGAVEVTPPPEENAPQEAEQTPVPKAE) are disordered. Over residues 520–534 (NAPQEAEQTPVPKAE) the composition is skewed to low complexity.

This sequence in the N-terminal section; belongs to the bacterial solute-binding protein 3 family. It in the C-terminal section; belongs to the transglycosylase Slt family.

It localises to the cell outer membrane. The enzyme catalyses Exolytic cleavage of the (1-&gt;4)-beta-glycosidic linkage between N-acetylmuramic acid (MurNAc) and N-acetylglucosamine (GlcNAc) residues in peptidoglycan, from either the reducing or the non-reducing ends of the peptidoglycan chains, with concomitant formation of a 1,6-anhydrobond in the MurNAc residue.. In terms of biological role, murein-degrading enzyme that degrades murein glycan strands and insoluble, high-molecular weight murein sacculi, with the concomitant formation of a 1,6-anhydromuramoyl product. Lytic transglycosylases (LTs) play an integral role in the metabolism of the peptidoglycan (PG) sacculus. Their lytic action creates space within the PG sacculus to allow for its expansion as well as for the insertion of various structures such as secretion systems and flagella. This Vibrio campbellii (strain ATCC BAA-1116) protein is Membrane-bound lytic murein transglycosylase F.